Consider the following 545-residue polypeptide: CTP synthase (545 aa).

Residues 1–266 are amidoligase domain; that stretch reads MTTRYIFVTG…DDLVTKRFGL (266 aa). Position 14 (S14) interacts with CTP. S14 is a binding site for UTP. ATP-binding positions include 15 to 20 and D72; that span reads SLGKGI. D72 and E140 together coordinate Mg(2+). Residues 147-149, 187-192, and K223 each bind CTP; these read DIE and KTKPTQ. UTP is bound by residues 187 to 192 and K223; that span reads KTKPTQ. Position 239 to 241 (239 to 241) interacts with ATP; that stretch reads KDV. In terms of domain architecture, Glutamine amidotransferase type-1 spans 291 to 542; that stretch reads TIGMVGKYTE…VAAAVAYQKR (252 aa). An L-glutamine-binding site is contributed by G352. Residue C379 is the Nucleophile; for glutamine hydrolysis of the active site. L-glutamine-binding positions include 380–383, E403, and R470; that span reads LGMQ. Catalysis depends on residues H515 and E517.

The protein belongs to the CTP synthase family. As to quaternary structure, homotetramer.

It catalyses the reaction UTP + L-glutamine + ATP + H2O = CTP + L-glutamate + ADP + phosphate + 2 H(+). The enzyme catalyses L-glutamine + H2O = L-glutamate + NH4(+). It carries out the reaction UTP + NH4(+) + ATP = CTP + ADP + phosphate + 2 H(+). Its pathway is pyrimidine metabolism; CTP biosynthesis via de novo pathway; CTP from UDP: step 2/2. Its activity is regulated as follows. Allosterically activated by GTP, when glutamine is the substrate; GTP has no effect on the reaction when ammonia is the substrate. The allosteric effector GTP functions by stabilizing the protein conformation that binds the tetrahedral intermediate(s) formed during glutamine hydrolysis. Inhibited by the product CTP, via allosteric rather than competitive inhibition. In terms of biological role, catalyzes the ATP-dependent amination of UTP to CTP with either L-glutamine or ammonia as the source of nitrogen. Regulates intracellular CTP levels through interactions with the four ribonucleotide triphosphates. The protein is CTP synthase of Shewanella loihica (strain ATCC BAA-1088 / PV-4).